The following is a 478-amino-acid chain: Sedoheptulokinase (478 aa).

It belongs to the FGGY kinase family. In terms of tissue distribution, strongly expressed in liver, kidney and pancreas. Expressed at lower levels in placenta and heart. Very weakly expressed in lung and brain.

The protein localises to the cytoplasm. The catalysed reaction is sedoheptulose + ATP = D-sedoheptulose 7-phosphate + ADP + H(+). Its function is as follows. Acts as a modulator of macrophage activation through control of glucose metabolism. The sequence is that of Sedoheptulokinase from Homo sapiens (Human).